Reading from the N-terminus, the 429-residue chain is Guanine nucleotide-binding protein subunit alpha (429 aa).

A lipid anchor (N-myristoyl glycine) is attached at G2. The S-palmitoyl cysteine moiety is linked to residue C3. Positions 40–429 constitute a G-alpha domain; sequence KGVKLLLLGA…QQNLKKSGIM (390 aa). The tract at residues 43–56 is G1 motif; the sequence is KLLLLGAGESGKST. Residues E51, S52, G53, K54, S55, and T56 each coordinate GTP. S55 provides a ligand contact to Mg(2+). Positions 125–197 are not present in other G-proteins; sequence LKQIDADVAG…KDSEQFTRLS (73 aa). Positions 249–257 are G2 motif; it reads DILKGRIKT. GTP-binding residues include L251, T257, G279, N345, K346, D348, and A401. Mg(2+) is bound at residue T257. A G3 motif region spans residues 272-281; sequence FKVLDAGGQR. A G4 motif region spans residues 341-348; that stretch reads ILFLNKID. Residues 399-404 are G5 motif; it reads TCATDS.

Belongs to the G-alpha family. G(q) subfamily. G proteins are composed of 3 units; alpha, beta and gamma. The alpha chain contains the guanine nucleotide binding site. The cofactor is Mg(2+).

In terms of biological role, guanine nucleotide-binding proteins (G proteins) are involved as modulators or transducers in various transmembrane signaling systems. Involved in the mating pathway. This chain is Guanine nucleotide-binding protein subunit alpha (CAG1), found in Candida albicans (strain WO-1) (Yeast).